The chain runs to 284 residues: MNKLKDYAELTRFNRPIGSFLLMWPTLWALWLAADGMPQWHLVIIFILGVFSMRSAGCVINDYADRKVDGFVDRTKNRPLPSGRVSEKEALMLFCALSILSFILVLFTDLRTILLSFVGLGLAALYPFMKRYTHLPQLFLGLAFSWAIPMAYSAQGGDLTDPKLWMLFVANCFWTIAYDTYYAMTDRPDDLKIGIKSTAILFGQYDLFVIICLQGLTLSLLTWIGLLAGLHWLYFVSLIVCVGLFYQQFKQAKERDRQACFRSFLDNNRVGYCVFIGLVASYFM.

7 consecutive transmembrane segments (helical) span residues 13-32 (FNRP…ALWL), 90-110 (ALML…FTDL), 112-132 (TILL…MKRY), 134-154 (HLPQ…AYSA), 164-184 (LWML…YYAM), 200-220 (ILFG…TLSL), and 224-244 (IGLL…CVGL).

This sequence belongs to the UbiA prenyltransferase family. Requires Mg(2+) as cofactor.

The protein resides in the cell inner membrane. It carries out the reaction all-trans-octaprenyl diphosphate + 4-hydroxybenzoate = 4-hydroxy-3-(all-trans-octaprenyl)benzoate + diphosphate. Its pathway is cofactor biosynthesis; ubiquinone biosynthesis. In terms of biological role, catalyzes the prenylation of para-hydroxybenzoate (PHB) with an all-trans polyprenyl group. Mediates the second step in the final reaction sequence of ubiquinone-8 (UQ-8) biosynthesis, which is the condensation of the polyisoprenoid side chain with PHB, generating the first membrane-bound Q intermediate 3-octaprenyl-4-hydroxybenzoate. This is 4-hydroxybenzoate octaprenyltransferase from Marinomonas sp. (strain MWYL1).